A 140-amino-acid polypeptide reads, in one-letter code: Natriuretic peptides B (140 aa).

Residues 1 to 26 form the signal peptide; that stretch reads MEPCAALPRALLLLLFLHLSPLGGRP. Residues 71-94 form a disordered region; it reads LEPLHRSHSPAEAPEAGGTPRGVL. A disulfide bridge connects residues Cys-118 and Cys-134.

This sequence belongs to the natriuretic peptide family. Post-translationally, the precursor molecule is proteolytically cleaved by the endoproteases FURIN or CORIN at Arg-108 to produce the brain natriuretic peptide 32. CORIN also cleaves the precursor molecule at additional residues including Arg-105, Arg-108 and possibly Lys-111. In terms of processing, undergoes further proteolytic cleavage by various proteases such as DPP4, MME and possibly FAP, to give rise to a variety of shorter peptides. Cleaved at Pro-110 by the prolyl endopeptidase FAP (seprase) activity (in vitro). Degraded by IDE. During IDE degradation, the resulting products initially increase the activation of NPR1 and can also stimulate NPR2 to produce cGMP before the fragments are completely degraded and inactivated by IDE (in vitro). As to expression, brain and also in atria, but at much lower levels than ANP.

The protein localises to the secreted. Cardiac hormone that plays a key role in mediating cardio-renal homeostasis. May also function as a paracrine antifibrotic factor in the heart. Acts by specifically binding and stimulating NPR1 to produce cGMP, which in turn activates effector proteins that drive various biological responses. Involved in regulating the extracellular fluid volume and maintaining the fluid-electrolyte balance through natriuresis, diuresis, vasorelaxation, and inhibition of renin and aldosterone secretion. Binds the clearance receptor NPR3. Functionally, may affect cardio-renal homeostasis. Able to promote the production of cGMP although its potency is very low compared to brain natriuretic peptide 32. The chain is Natriuretic peptides B (NPPB) from Canis lupus familiaris (Dog).